The following is a 320-amino-acid chain: Aurora kinase B (320 aa).

A compositionally biased stretch (basic and acidic residues) spans 1 to 10 (MQNKENREPR). Positions 1 to 38 (MQNKENREPRVQQTPSAGVGPLRVEMNPDTHAVSGPGR) are disordered. The region spanning 53-303 (FDIGRPLGKG…LRSVMEHPWV (251 aa)) is the Protein kinase domain. ATP-binding positions include 59–67 (LGKGKFGNV) and lysine 82. Aspartate 176 (proton acceptor) is an active-site residue.

This sequence belongs to the protein kinase superfamily. Ser/Thr protein kinase family. Aurora subfamily. In terms of assembly, component of the chromosomal passenger complex (CPC).

The protein localises to the nucleus. It localises to the chromosome. Its subcellular location is the centromere. It is found in the cytoplasm. The protein resides in the cytoskeleton. The protein localises to the spindle. It localises to the midbody. It catalyses the reaction L-seryl-[protein] + ATP = O-phospho-L-seryl-[protein] + ADP + H(+). It carries out the reaction L-threonyl-[protein] + ATP = O-phospho-L-threonyl-[protein] + ADP + H(+). Kinase activity is stimulated by cell-cycle specific phosphorylation. In terms of biological role, serine/threonine-protein kinase component of the chromosomal passenger complex (CPC), a complex that acts as a key regulator of mitosis. The CPC complex has essential functions at the centromere in ensuring correct chromosome alignment and segregation and is required for chromatin-induced microtubule stabilization and spindle assembly. Involved in the bipolar attachment of spindle microtubules to kinetochores and is a key regulator for the onset of cytokinesis during mitosis. Required for central/midzone spindle assembly and cleavage furrow formation. Key component of the cytokinesis checkpoint, a process required to delay abscission to prevent both premature resolution of intercellular chromosome bridges and accumulation of DNA damage. Phosphorylates 'Ser-10' of histone H3 during mitosis. This Danio rerio (Zebrafish) protein is Aurora kinase B (aurkb).